The chain runs to 214 residues: Non-structural protein NP-1 (214 aa).

Disordered regions lie at residues 1 to 87 (MSSE…TNPY) and 192 to 214 (ESEE…NASN). The segment covering 33-43 (SRSRSPIRRHG) has biased composition (basic residues). Positions 44-55 (EKNLEYAHHSNQ) are enriched in basic and acidic residues. Positions 56 to 71 (ENRQSSYTALKTSDQA) are enriched in polar residues. Over residues 192-201 (ESEEVTDEEM) the composition is skewed to acidic residues.

This sequence belongs to the Bocaparvovirus Non-structural protein NP-1 family.

It localises to the host nucleus. Required for the expression of the capsid proteins. Performs the splicing and internal polyadenylation of the viral capsid-encoding mRNA precursor, which allows its maturation and expression. Transactivates the viral promoter. In Human bocavirus 2 (HBoV2), this protein is Non-structural protein NP-1 (NP1).